The following is a 186-amino-acid chain: Archaemetzincin (186 aa).

His136 serves as a coordination point for Zn(2+). The Proton acceptor role is filled by Glu137. Residues His140, His146, Cys147, Cys152, Cys171, and Cys174 each coordinate Zn(2+).

Belongs to the peptidase M54 family. In terms of assembly, monomer. It depends on Zn(2+) as a cofactor.

Functionally, probable zinc metalloprotease whose natural substrate is unknown. The protein is Archaemetzincin of Thermococcus kodakarensis (strain ATCC BAA-918 / JCM 12380 / KOD1) (Pyrococcus kodakaraensis (strain KOD1)).